The primary structure comprises 29 residues: Toxin TdII-3 (29 aa).

The region spanning 1–29 (KDGYLVGTDGCKYGCFTRPGHFCANEECL) is the LCN-type CS-alpha/beta domain.

Belongs to the long (4 C-C) scorpion toxin superfamily. Sodium channel inhibitor family. Beta subfamily. As to expression, expressed by the venom gland.

It localises to the secreted. Functionally, binds voltage-independently to sodium channels (Nav) and shifts the voltage of activation toward more negative potentials. This toxin is active against mammals and also affects neuromuscular preparations of frog. This is Toxin TdII-3 from Tityus discrepans (Venezuelan scorpion).